A 534-amino-acid chain; its full sequence is Protein FAM83D (534 aa).

2 disordered regions span residues 320–372 (TPPS…STLG) and 501–534 (GLNR…RGLQ). Positions 329–342 (TKPQAERLTSTPAR) are enriched in polar residues. The segment covering 350-362 (RMNKDIEEPDRKS) has biased composition (basic and acidic residues). The segment covering 511–520 (EARQPNTNID) has biased composition (polar residues).

It belongs to the FAM83 family.

It is found in the cytoplasm. Its subcellular location is the cytoskeleton. The protein resides in the spindle. The protein localises to the spindle pole. May regulate cell proliferation, growth, migration and epithelial to mesenchymal transition. May also be important for proper chromosome congression and alignment during mitosis. In Danio rerio (Zebrafish), this protein is Protein FAM83D.